The chain runs to 445 residues: Phosphoglucosamine mutase (445 aa).

The active-site Phosphoserine intermediate is the Ser-102. Mg(2+) is bound by residues Ser-102, Asp-241, Asp-243, and Asp-245. Position 102 is a phosphoserine (Ser-102).

This sequence belongs to the phosphohexose mutase family. It depends on Mg(2+) as a cofactor. Post-translationally, activated by phosphorylation.

The enzyme catalyses alpha-D-glucosamine 1-phosphate = D-glucosamine 6-phosphate. Its function is as follows. Catalyzes the conversion of glucosamine-6-phosphate to glucosamine-1-phosphate. This chain is Phosphoglucosamine mutase, found in Edwardsiella ictaluri (strain 93-146).